The chain runs to 213 residues: Thymidylate kinase (213 aa).

10–17 (GLEGAGKT) is a binding site for ATP.

Belongs to the thymidylate kinase family.

The enzyme catalyses dTMP + ATP = dTDP + ADP. Its function is as follows. Phosphorylation of dTMP to form dTDP in both de novo and salvage pathways of dTTP synthesis. In Salmonella arizonae (strain ATCC BAA-731 / CDC346-86 / RSK2980), this protein is Thymidylate kinase.